Here is a 159-residue protein sequence, read N- to C-terminus: Small ribosomal subunit protein uS7 (159 aa).

The protein belongs to the universal ribosomal protein uS7 family. Part of the 30S ribosomal subunit. Contacts proteins S9 and S11.

Functionally, one of the primary rRNA binding proteins, it binds directly to 16S rRNA where it nucleates assembly of the head domain of the 30S subunit. Is located at the subunit interface close to the decoding center, probably blocks exit of the E-site tRNA. This chain is Small ribosomal subunit protein uS7, found in Sulfurihydrogenibium sp. (strain YO3AOP1).